The primary structure comprises 311 residues: Coproporphyrin III ferrochelatase 1 (311 aa).

Residues tyrosine 12, arginine 29, 45-46 (RY), serine 53, and tyrosine 124 each bind Fe-coproporphyrin III. Fe(2+) contacts are provided by histidine 182 and glutamate 263.

It belongs to the ferrochelatase family.

It is found in the cytoplasm. The enzyme catalyses Fe-coproporphyrin III + 2 H(+) = coproporphyrin III + Fe(2+). It functions in the pathway porphyrin-containing compound metabolism; protoheme biosynthesis. Its function is as follows. Involved in coproporphyrin-dependent heme b biosynthesis. Catalyzes the insertion of ferrous iron into coproporphyrin III to form Fe-coproporphyrin III. The sequence is that of Coproporphyrin III ferrochelatase 1 from Bacillus cereus (strain ZK / E33L).